The primary structure comprises 216 residues: Octanoyltransferase (216 aa).

Residues 30–204 (KNNINEIWLL…NCKKFLMMNN (175 aa)) enclose the BPL/LPL catalytic domain. Residues 68–75 (RGGHMTFH), 135–137 (SIG), and 148–150 (GLA) each bind substrate. The active-site Acyl-thioester intermediate is Cys166.

Belongs to the LipB family.

Its subcellular location is the cytoplasm. The catalysed reaction is octanoyl-[ACP] + L-lysyl-[protein] = N(6)-octanoyl-L-lysyl-[protein] + holo-[ACP] + H(+). Its pathway is protein modification; protein lipoylation via endogenous pathway; protein N(6)-(lipoyl)lysine from octanoyl-[acyl-carrier-protein]: step 1/2. Functionally, catalyzes the transfer of endogenously produced octanoic acid from octanoyl-acyl-carrier-protein onto the lipoyl domains of lipoate-dependent enzymes. Lipoyl-ACP can also act as a substrate although octanoyl-ACP is likely to be the physiological substrate. The sequence is that of Octanoyltransferase from Wigglesworthia glossinidia brevipalpis.